The following is a 601-amino-acid chain: Proteasome-associated ATPase (601 aa).

A compositionally biased stretch (gly residues) spans 1–15 (MSGPRSGSGSGGSTG). The interval 1-29 (MSGPRSGSGSGGSTGRPGDADSQRSAYEK) is disordered. The segment covering 18-29 (GDADSQRSAYEK) has biased composition (basic and acidic residues). The stretch at 19-106 (DADSQRSAYE…LKEEVDRLAQ (88 aa)) forms a coiled coil. Residue 289 to 294 (GCGKTL) participates in ATP binding. A docks into pockets in the proteasome alpha-ring region spans residues 600-601 (YL).

The protein belongs to the AAA ATPase family. Homohexamer. Assembles into a hexameric ring structure that caps the 20S proteasome core. Strongly interacts with the prokaryotic ubiquitin-like protein Pup through a hydrophobic interface; the interacting region of ARC lies in its N-terminal coiled-coil domain. There is one Pup binding site per ARC hexamer ring. Upon ATP-binding, the C-terminus of ARC interacts with the alpha-rings of the proteasome core, possibly by binding to the intersubunit pockets.

It participates in protein degradation; proteasomal Pup-dependent pathway. Its function is as follows. ATPase which is responsible for recognizing, binding, unfolding and translocation of pupylated proteins into the bacterial 20S proteasome core particle. May be essential for opening the gate of the 20S proteasome via an interaction with its C-terminus, thereby allowing substrate entry and access to the site of proteolysis. Thus, the C-termini of the proteasomal ATPase may function like a 'key in a lock' to induce gate opening and therefore regulate proteolysis. In Parafrankia sp. (strain EAN1pec), this protein is Proteasome-associated ATPase.